Consider the following 448-residue polypeptide: Tubulin beta chain (448 aa).

Gln-11, Glu-69, Ser-138, Gly-142, Thr-143, Gly-144, Asn-204, and Asn-226 together coordinate GTP. Glu-69 provides a ligand contact to Mg(2+). Residues 425–448 (YQDASISEGEEEYLEEEEPLEHEE) are disordered. The span at 432-448 (EGEEEYLEEEEPLEHEE) shows a compositional bias: acidic residues.

This sequence belongs to the tubulin family. In terms of assembly, dimer of alpha and beta chains. A typical microtubule is a hollow water-filled tube with an outer diameter of 25 nm and an inner diameter of 15 nM. Alpha-beta heterodimers associate head-to-tail to form protofilaments running lengthwise along the microtubule wall with the beta-tubulin subunit facing the microtubule plus end conferring a structural polarity. Microtubules usually have 13 protofilaments but different protofilament numbers can be found in some organisms and specialized cells. The cofactor is Mg(2+).

Its subcellular location is the cytoplasm. The protein localises to the cytoskeleton. In terms of biological role, tubulin is the major constituent of microtubules, a cylinder consisting of laterally associated linear protofilaments composed of alpha- and beta-tubulin heterodimers. Microtubules grow by the addition of GTP-tubulin dimers to the microtubule end, where a stabilizing cap forms. Below the cap, tubulin dimers are in GDP-bound state, owing to GTPase activity of alpha-tubulin. The protein is Tubulin beta chain of Aspergillus flavus.